A 499-amino-acid chain; its full sequence is Glycerol kinase 2 (499 aa).

Threonine 13 contributes to the ADP binding site. The ATP site is built by threonine 13, threonine 14, and serine 15. Threonine 13 provides a ligand contact to sn-glycerol 3-phosphate. An ADP-binding site is contributed by arginine 17. 4 residues coordinate sn-glycerol 3-phosphate: arginine 83, glutamate 84, tyrosine 134, and aspartate 241. Positions 83, 84, 134, 241, and 242 each coordinate glycerol. Residues threonine 263 and glycine 306 each contribute to the ADP site. ATP is bound by residues threonine 263, glycine 306, glutamine 310, and glycine 407. Glycine 407 contributes to the ADP binding site.

This sequence belongs to the FGGY kinase family.

The enzyme catalyses glycerol + ATP = sn-glycerol 3-phosphate + ADP + H(+). It participates in polyol metabolism; glycerol degradation via glycerol kinase pathway; sn-glycerol 3-phosphate from glycerol: step 1/1. In terms of biological role, key enzyme in the regulation of glycerol uptake and metabolism. Catalyzes the phosphorylation of glycerol to yield sn-glycerol 3-phosphate. This Saccharolobus solfataricus (strain ATCC 35092 / DSM 1617 / JCM 11322 / P2) (Sulfolobus solfataricus) protein is Glycerol kinase 2.